Reading from the N-terminus, the 144-residue chain is MDPQEMVVKNPYAHISIPRAHLRPDLGQQLEVASTCSSSSEMQPLPVGPCAPEPTHLLQPTEVPGPKGAKGNQGAAPIQNQQAWQQPGNPYSSSQRQAGLTYAGPPPAGRGDDIAHHCCCCPCCHCCHCPPFCRCHSCCCCVIS.

Positions 51 to 105 are disordered; the sequence is APEPTHLLQPTEVPGPKGAKGNQGAAPIQNQQAWQQPGNPYSSSQRQAGLTYAGP. A compositionally biased stretch (polar residues) spans 78–98; sequence IQNQQAWQQPGNPYSSSQRQA.

Belongs to the CYSRT1 family. In terms of assembly, interacts with LCE1B; the interaction is direct. Interacts with LCE2C; the interaction is direct. Interacts with LCE3A; the interaction is direct. Interacts with LCE3C; the interaction is direct. Interacts with LCE4A; the interaction is direct. Interacts with LCE5A; the interaction is direct. Interacts with LCE1C. Interacts with LCE1D. Interacts with LCE1E. Interacts with LCE2A. Interacts with LCE3D. Interacts with LCE3E. Interacts with LCE1A. In terms of tissue distribution, expressed in the stratum granulosum, in skin and oral epithelia (at protein level).

The protein resides in the cornified envelope. In terms of biological role, component of the stratum corneum that may contribute to epidermal antimicrobial host defenses. The polypeptide is Cysteine-rich tail protein 1 (CYSRT1) (Homo sapiens (Human)).